The primary structure comprises 742 residues: uncharacterized protein (742 aa).

The interval 167-471 (GIVPPEPWGH…AAGAAGGGGA (305 aa)) is disordered. Residues 205 to 218 (PAPPPSLFAPPPPS) are compositionally biased toward pro residues. Polar residues-rich tracts occupy residues 318 to 331 (SPAT…NAVS) and 358 to 368 (GSPQTLSTAPS). Residues 386–401 (TAGPAAPPTTGGPPAP) show a composition bias toward pro residues. Over residues 421–432 (PLSGGVPGGAVP) the composition is skewed to low complexity. Pro residues predominate over residues 433-447 (LGPPPTPPPAAPVTT). Low complexity predominate over residues 448 to 464 (PPLASGAPVAPTGAAAG).

May be involved in the ESX-1 / type VII specialized secretion system (T7SS), which exports several proteins including EsxA and EsxB. Involved in DNA conjugation in the recipient strain. This is an uncharacterized protein from Mycolicibacterium smegmatis (strain MKD8) (Mycobacterium smegmatis).